We begin with the raw amino-acid sequence, 51 residues long: UPF0320 protein YOL166W-A (51 aa).

It belongs to the UPF0320 family.

The polypeptide is UPF0320 protein YOL166W-A (Saccharomyces cerevisiae (strain ATCC 204508 / S288c) (Baker's yeast)).